The primary structure comprises 614 residues: Sodium- and chloride-dependent betaine transporter (614 aa).

The Cytoplasmic segment spans residues 1 to 44; sequence MDGKVAVQECGPPAVSWVPEEGEKLDQEDEDQVKDRGQWTNKME. 3 consecutive transmembrane segments (helical) span residues 45-65, 73-92, and 117-137; these read FVLS…FPYL, AFFI…VFFL, and GIGL…IIIL. The Extracellular segment spans residues 138-210; that stretch reads AWALFYLFSS…SGIHDLGSLR (73 aa). A disulfide bridge connects residues Cys-157 and Cys-166. 2 N-linked (GlcNAc...) asparagine glycosylation sites follow: Asn-171 and Asn-183. Transmembrane regions (helical) follow at residues 211-229, 238-255, 291-308, 320-341, 374-393, 423-441, 458-478, 499-518, and 538-556; these read WELA…FCIW, VVYF…ILLI, IFFS…LGSY, IALC…FSIL, MPLS…FLGL, LLIL…FLVT, GICL…VYGA, ISWL…FSLS, and IGWF…FVVI. Topologically, residues 557–614 are cytoplasmic; the sequence is TLLKTRGPFRKRLRQLITPDSSLPQPKQHPCLDGSAGRNFGPSPTREGLIAGEKETHL. The segment at 576 to 614 is disordered; that stretch reads DSSLPQPKQHPCLDGSAGRNFGPSPTREGLIAGEKETHL.

Belongs to the sodium:neurotransmitter symporter (SNF) (TC 2.A.22) family. SLC6A12 subfamily. Interacts with LIN7C. As to expression, expressed in kidney, liver, heart, skeletal muscle, placenta, and a widespread distribution in the brain.

The protein localises to the basolateral cell membrane. Its subcellular location is the cell membrane. The catalysed reaction is 4-aminobutanoate(out) + chloride(out) + 3 Na(+)(out) = 4-aminobutanoate(in) + chloride(in) + 3 Na(+)(in). The enzyme catalyses glycine betaine(out) + 2 chloride(out) + 3 Na(+)(out) = glycine betaine(in) + 2 chloride(in) + 3 Na(+)(in). In terms of biological role, transporter that mediates cellular uptake of betaine and GABA in a sodium- and chloride-dependent process. May have a role in regulation of GABAergic transmission in the brain through the reuptake of GABA into presynaptic terminals, as well as in osmotic regulation. Probably also involved in renal and hepatic osmotic regulation. The polypeptide is Sodium- and chloride-dependent betaine transporter (Homo sapiens (Human)).